Here is a 500-residue protein sequence, read N- to C-terminus: Lysine--tRNA ligase (500 aa).

Mg(2+) contacts are provided by Glu410 and Glu417.

The protein belongs to the class-II aminoacyl-tRNA synthetase family. As to quaternary structure, homodimer. Requires Mg(2+) as cofactor.

The protein resides in the cytoplasm. It carries out the reaction tRNA(Lys) + L-lysine + ATP = L-lysyl-tRNA(Lys) + AMP + diphosphate. This is Lysine--tRNA ligase from Pseudomonas entomophila (strain L48).